We begin with the raw amino-acid sequence, 524 residues long: Probable aminopeptidase NPEPL1 (524 aa).

Zn(2+) is bound by residues Lys260 and Asp265. The active site involves Lys272. 3 residues coordinate Zn(2+): Asp283, Asp342, and Glu344. Arg346 is an active-site residue.

The protein belongs to the peptidase M17 family. Zn(2+) serves as cofactor. Mn(2+) is required as a cofactor.

In terms of biological role, probably catalyzes the removal of unsubstituted N-terminal amino acids from various peptides. In Mus musculus (Mouse), this protein is Probable aminopeptidase NPEPL1 (Npepl1).